Here is a 490-residue protein sequence, read N- to C-terminus: 2,3-bisphosphoglycerate-independent phosphoglycerate mutase (490 aa).

Mn(2+)-binding residues include Asp-9 and Ser-59. Ser-59 (phosphoserine intermediate) is an active-site residue. Residues His-116, Arg-145–Asp-146, Arg-175, Arg-181, Arg-246–Arg-249, and Lys-319 contribute to the substrate site. Asp-385, His-389, Asp-426, His-427, and His-444 together coordinate Mn(2+).

It belongs to the BPG-independent phosphoglycerate mutase family. As to quaternary structure, monomer. Mn(2+) is required as a cofactor.

The enzyme catalyses (2R)-2-phosphoglycerate = (2R)-3-phosphoglycerate. Its pathway is carbohydrate degradation; glycolysis; pyruvate from D-glyceraldehyde 3-phosphate: step 3/5. In terms of biological role, catalyzes the interconversion of 2-phosphoglycerate and 3-phosphoglycerate. In Helicobacter hepaticus (strain ATCC 51449 / 3B1), this protein is 2,3-bisphosphoglycerate-independent phosphoglycerate mutase.